Here is a 42-residue protein sequence, read N- to C-terminus: Alpha-conotoxin VnIB (42 aa).

A propeptide spanning residues 1-22 (ASDGRNAAADDKASDPIALTVR) is cleaved from the precursor. 2 cysteine pairs are disulfide-bonded: Cys25-Cys31 and Cys26-Cys38. Gly39 is subject to Glycine amide.

This sequence belongs to the conotoxin A superfamily. In terms of tissue distribution, expressed by the venom duct.

It localises to the secreted. Its function is as follows. Alpha-conotoxins act on postsynaptic membranes, they bind to the nicotinic acetylcholine receptors (nAChR) and thus inhibit them. This toxin potently and selectively inhibits human and rat alpha-6-beta-4/CHRNA6-CHRNB4 nAChR (IC(50)=12 nM on rat nAChR). It exhibits rapid binding and unbinding at this receptor. It also shows activity on rat alpha-6-beta-4/CHRNA6-CHRNB4 (IC(50)=12 nM), human alpha-6/alpha-3-beta-4 (CHRNA6/CHRNA3-CHRNB4) (IC(50)=5.3 nM), rat alpha-6/alpha-3-beta-4 (CHRNA6/CHRNA3-CHRNB4) (IC(50)=18 nM), rat alpha-3-beta-4/CHRNA3-CHRNB4 (IC(50)=320 nM), and rat alpha-6/alpha-3-beta-2-beta-3 (CHRNA6/CHRNA3-CHRNB2-CHRNB3) (IC(50)=4 uM). The chain is Alpha-conotoxin VnIB from Conus ventricosus (Mediterranean cone).